The sequence spans 741 residues: Cytosolic phospholipase A2 (741 aa).

A C2 domain is found at 1 to 116 (MSNIIVEHQY…KVAQMEHVTL (116 aa)). The interval 1–172 (MSNIIVEHQY…IKKLLKMENP (172 aa)) is phospholipid binding. The Ca(2+) site is built by D34, T35, D37, N59, D87, A88, and N89. The 598-residue stretch at 132-729 (VCASTDLRFS…SLSEIENKKF (598 aa)) folds into the PLA2c domain. S223 acts as the Nucleophile in catalysis. Positions 406 to 453 (TSSSTMEEELEQIKPEHIVGDDSADNEEETQRGGTESADAEDERQRHA) are disordered. Positions 416–425 (EQIKPEHIVG) are enriched in basic and acidic residues. The residue at position 498 (S498) is a Phosphoserine; by MAPK. The active-site Proton acceptor is D540.

Post-translationally, activated by phosphorylation on a serine residue.

It localises to the cytoplasm. It is found in the cytoplasmic vesicle. The catalysed reaction is a 1,2-diacyl-sn-glycero-3-phosphocholine + H2O = a 1-acyl-sn-glycero-3-phosphocholine + a fatty acid + H(+). The enzyme catalyses a 1-acyl-sn-glycero-3-phosphocholine + H2O = sn-glycerol 3-phosphocholine + a fatty acid + H(+). Its activity is regulated as follows. Stimulated by agonists such as ATP, EGF, thrombin and bradykinin as well as by cytosolic Ca(2+). Selectively hydrolyzes arachidonyl phospholipids in the sn-2 position releasing arachidonic acid. Together with its lysophospholipid activity, it is implicated in the initiation of the inflammatory response. The protein is Cytosolic phospholipase A2 (pla2g4a) of Danio rerio (Zebrafish).